We begin with the raw amino-acid sequence, 780 residues long: Pumilio domain-containing protein C4G8.03c (780 aa).

Disordered stretches follow at residues 1–29 (MVNR…LSSY), 298–330 (LSHF…LHSK), and 358–411 (NHHS…GKTV). The span at 298 to 307 (LSHFPDHLDP) shows a compositional bias: basic and acidic residues. Low complexity predominate over residues 311-322 (PSPYQPSSLQPL). The span at 358–382 (NHHSSLSMDNDPTNVSTKNRNNQTV) shows a compositional bias: polar residues. Positions 435 to 778 (EKSDDLSNLL…HILAKLTSST (344 aa)) constitute a PUM-HD domain. 9 Pumilio repeats span residues 462–497 (GFLG…LFFP), 498–533 (EIRQ…SMLN), 534–569 (GIGE…SLLL), 570–606 (KIII…PLFL), 607–642 (SMEE…RLVN), 643–678 (SIIK…RIIE), 679–714 (KFFG…QMLQ), 715–752 (EFLS…LILR), and 753–780 (SISH…STSS).

This is Pumilio domain-containing protein C4G8.03c from Schizosaccharomyces pombe (strain 972 / ATCC 24843) (Fission yeast).